A 276-amino-acid polypeptide reads, in one-letter code: Large ribosomal subunit protein uL2 (276 aa).

The disordered stretch occupies residues 224–254; that stretch reads VMNPVDHPHGGGEGRTSGGRHPVTPWGVPTK.

It belongs to the universal ribosomal protein uL2 family. In terms of assembly, part of the 50S ribosomal subunit. Forms a bridge to the 30S subunit in the 70S ribosome.

Functionally, one of the primary rRNA binding proteins. Required for association of the 30S and 50S subunits to form the 70S ribosome, for tRNA binding and peptide bond formation. It has been suggested to have peptidyltransferase activity; this is somewhat controversial. Makes several contacts with the 16S rRNA in the 70S ribosome. This Gluconobacter oxydans (strain 621H) (Gluconobacter suboxydans) protein is Large ribosomal subunit protein uL2.